A 771-amino-acid chain; its full sequence is Beta-glucan synthesis-associated protein SKN1 (771 aa).

Residues 1-11 show a composition bias toward polar residues; that stretch reads MSVRNLTNNRH. 2 disordered regions span residues 1-112 and 126-186; these read MSVR…QRMS and ANNL…PFDR. At 1-289 the chain is on the cytoplasmic side; it reads MSVRNLTNNR…DDFKHMDRRS (289 aa). The span at 14–37 shows a compositional bias: low complexity; the sequence is SENSVSGSENSFYSSNEQSRQSSS. S56, S65, S67, S92, S103, S142, S162, S165, S170, and S176 each carry phosphoserine. A compositionally biased stretch (low complexity) spans 76–93; it reads NEYSSSSSINYNNDPNSD. Composition is skewed to low complexity over residues 126-152 and 159-177; these read ANNLNNHNNNNYKNIISSSNDNSFASH and NLPSHPSSNNMSSFSNNSL. The helical; Signal-anchor for type II membrane protein transmembrane segment at 290–310 threads the bilayer; that stretch reads FLGLLGILFLFMAGIFIFIVL. Topologically, residues 311–771 are lumenal; that stretch reads PAITFSGVVY…GCSSSKFSLS (461 aa). 6 N-linked (GlcNAc...) asparagine glycosylation sites follow: N337, N426, N513, N590, N615, and N743. Residues 353–716 form the GH16 domain; the sequence is AIRTTLVDPD…YVRLYQPKGS (364 aa).

The protein belongs to the SKN1/KRE6 family.

The protein resides in the membrane. Functionally, required for synthesis of the major beta-glucans of the yeast cell wall. In Saccharomyces cerevisiae (strain ATCC 204508 / S288c) (Baker's yeast), this protein is Beta-glucan synthesis-associated protein SKN1 (SKN1).